Here is a 277-residue protein sequence, read N- to C-terminus: Small ribosomal subunit protein uS2 (277 aa).

Positions 255–277 (AVATTDEASAPSAAATETTTEEG) are disordered. Residues 257–277 (ATTDEASAPSAAATETTTEEG) are compositionally biased toward low complexity.

The protein belongs to the universal ribosomal protein uS2 family.

This Mycobacteroides abscessus (strain ATCC 19977 / DSM 44196 / CCUG 20993 / CIP 104536 / JCM 13569 / NCTC 13031 / TMC 1543 / L948) (Mycobacterium abscessus) protein is Small ribosomal subunit protein uS2.